A 684-amino-acid polypeptide reads, in one-letter code: uncharacterized protein (684 aa).

The Helicase ATP-binding domain maps to 54–239 (LKYLYNKKDV…LLFNRDFEVV (186 aa)). 67-74 (TSTASGKS) contributes to the ATP binding site. The DEVH box motif lies at 181–184 (DELH). Residues 264–419 (LLRRLIENLV…YMPVNIKNRF (156 aa)) form the Helicase C-terminal domain.

Belongs to the helicase family.

This is an uncharacterized protein from Methanocaldococcus jannaschii (strain ATCC 43067 / DSM 2661 / JAL-1 / JCM 10045 / NBRC 100440) (Methanococcus jannaschii).